The primary structure comprises 797 residues: Ribosome biogenesis protein BOP1 homolog (797 aa).

2 disordered regions span residues 22–112 (LVPS…GGGP) and 149–177 (SICA…RNTV). The span at 61–73 (AGAAAAAVEGTAA) shows a compositional bias: low complexity. Over residues 74-87 (PEDEAADNSSEEDA) the composition is skewed to acidic residues. The segment covering 90 to 112 (GSHGEGAGEGGGSGTWPGNGGGP) has biased composition (gly residues). 7 WD repeats span residues 462-502 (GHMG…CWRT), 504-544 (VLEG…EEAE), 581-623 (RLRF…SQNP), 626-664 (KNRG…LAKK), 667-706 (GGGG…KPYK), 710-749 (YHSA…DLLT), and 766-797 (TASE…LYCN).

Belongs to the WD repeat BOP1/ERB1 family.

Its subcellular location is the nucleus. It is found in the nucleolus. The protein localises to the nucleoplasm. In terms of biological role, required for maturation of ribosomal RNAs and formation of the large ribosomal subunit. The sequence is that of Ribosome biogenesis protein BOP1 homolog from Chlamydomonas reinhardtii (Chlamydomonas smithii).